A 341-amino-acid chain; its full sequence is 33 kDa chaperonin (341 aa).

2 disulfides stabilise this stretch: C245/C247 and C278/C281.

The protein belongs to the HSP33 family. Under oxidizing conditions two disulfide bonds are formed involving the reactive cysteines. Under reducing conditions zinc is bound to the reactive cysteines and the protein is inactive.

The protein resides in the cytoplasm. Its function is as follows. Redox regulated molecular chaperone. Protects both thermally unfolding and oxidatively damaged proteins from irreversible aggregation. Plays an important role in the bacterial defense system toward oxidative stress. The protein is 33 kDa chaperonin of Thermus thermophilus (strain ATCC BAA-163 / DSM 7039 / HB27).